Consider the following 351-residue polypeptide: UDP-3-O-acylglucosamine N-acyltransferase (351 aa).

The active-site Proton acceptor is the H240.

Belongs to the transferase hexapeptide repeat family. LpxD subfamily. Homotrimer.

It carries out the reaction a UDP-3-O-[(3R)-3-hydroxyacyl]-alpha-D-glucosamine + a (3R)-hydroxyacyl-[ACP] = a UDP-2-N,3-O-bis[(3R)-3-hydroxyacyl]-alpha-D-glucosamine + holo-[ACP] + H(+). The protein operates within bacterial outer membrane biogenesis; LPS lipid A biosynthesis. Catalyzes the N-acylation of UDP-3-O-acylglucosamine using 3-hydroxyacyl-ACP as the acyl donor. Is involved in the biosynthesis of lipid A, a phosphorylated glycolipid that anchors the lipopolysaccharide to the outer membrane of the cell. The sequence is that of UDP-3-O-acylglucosamine N-acyltransferase from Pseudomonas putida (strain ATCC 700007 / DSM 6899 / JCM 31910 / BCRC 17059 / LMG 24140 / F1).